The following is a 1302-amino-acid chain: Multidrug resistance protein homolog 65 (1302 aa).

The tract at residues 1 to 23 is disordered; the sequence is MERDEVSTSSSEGKSQEEAPMAE. The Cytoplasmic segment spans residues 1–48; sequence MERDEVSTSSSEGKSQEEAPMAEGLEPTEPIAFLKLFRFSTYGEIGWL. The ABC transmembrane type-1 1 domain maps to 48 to 369; that stretch reads LFFGFIMCCI…TAPFLESFAT (322 aa). The helical transmembrane segment at 49-69 threads the bilayer; sequence FFGFIMCCIKALTLPAVVIIY. At 70-118 the chain is on the extracellular side; sequence SEFTSMLVDRAMQFGTSSNVHALPLFGGGKTLTNASREENNEALYDDSI. The N-linked (GlcNAc...) asparagine glycan is linked to Asn-103. The helical transmembrane segment at 119–147 threads the bilayer; it reads SYGILLTIASVVMFISGIFSVDVFNMVAL. Residues 148 to 194 are Cytoplasmic-facing; it reads RQVTRMRIKLFSSVIRQDIGWHDLASKQNFTQSMVDDVEKIRDGISE. Residues 195 to 215 traverse the membrane as a helical segment; the sequence is KVGHFVYLVVGFIITVAISFS. The Extracellular portion of the chain corresponds to 216-223; it reads YGWKLTLA. A helical membrane pass occupies residues 224–242; sequence VSSYIPLVILLNYYVAKFQ. Residues 243–302 lie on the Cytoplasmic side of the membrane; it reads GKLTAREQESYAGAGNLAEEILSSIRTVVSFGGEKSEVQRYENFLVPARKASQWKGAFSG. The chain crosses the membrane as a helical span at residues 303 to 323; that stretch reads LSDAVLKSMLYLSCAGAFWYG. Residues 324 to 341 lie on the Extracellular side of the membrane; it reads VNLIIDDRNVENKEYTPA. Residues 342-362 form a helical membrane-spanning segment; that stretch reads ILMIAFFGIIVGADNIARTAP. Residues 363 to 731 are Cytoplasmic-facing; sequence FLESFATARG…LQLAKQEWCY (369 aa). Positions 405-641 constitute an ABC transporter 1 domain; the sequence is VEFQDVFFRY…EGAYYNMVRA (237 aa). Residue 440-447 participates in ATP binding; it reads GSSGCGKS. Residues 732–753 traverse the membrane as a helical segment; the sequence is LILGTISAVAVGFLYPAFAVIF. The ABC transmembrane type-1 2 domain maps to 732–1020; sequence LILGTISAVA…SLAFTPAFSA (289 aa). Over 754-776 the chain is Extracellular; the sequence is GEFYAALAEKDPEDALRRTAVLS. A helical transmembrane segment spans residues 777–798; sequence WACLGLAFLTGLVCFLQTYLFN. Residues 799–852 are Cytoplasmic-facing; that stretch reads YAGIWLTTRMRAMTFNAMVNQEVGWFDDENNSVGALSARLSGEAVDIQGAIGYP. A helical membrane pass occupies residues 853-873; it reads LSGMIQALSNFISSVSVAMYY. Position 874 (Asn-874) is a topological domain, extracellular. Residues 875 to 894 form a helical membrane-spanning segment; the sequence is WKLALLCLANCPIIVGSVIL. At 895 to 956 the chain is on the cytoplasmic side; it reads EAKMMSNAVV…VEVLIRQKLR (62 aa). A helical transmembrane segment spans residues 957-977; it reads WRGVLNSTMQASAFFAYAVAL. Over 978 to 993 the chain is Extracellular; the sequence is CYGGVLVSEGQLPFQD. The helical transmembrane segment at 994–1014 threads the bilayer; the sequence is IIKVSETLLYGSMMLAQSLAF. The Cytoplasmic portion of the chain corresponds to 1015–1302; sequence TPAFSAALIA…AKLHKTQKDH (288 aa). In terms of domain architecture, ABC transporter 2 spans 1059–1298; the sequence is VRYRGIQFRY…GGIYAKLHKT (240 aa). 1094-1101 serves as a coordination point for ATP; sequence GHSGCGKS.

This sequence belongs to the ABC transporter superfamily. ABCB family. Multidrug resistance exporter (TC 3.A.1.201) subfamily.

The protein localises to the membrane. The catalysed reaction is ATP + H2O + xenobioticSide 1 = ADP + phosphate + xenobioticSide 2.. The sequence is that of Multidrug resistance protein homolog 65 (Mdr65) from Drosophila melanogaster (Fruit fly).